Here is a 147-residue protein sequence, read N- to C-terminus: Ubiquitin-conjugating enzyme E2-16 kDa (147 aa).

The 147-residue stretch at 1 to 147 folds into the UBC core domain; sequence MALKRINKEL…AREWTRKYAI (147 aa). The Glycyl thioester intermediate role is filled by Cys-107.

The protein belongs to the ubiquitin-conjugating enzyme family.

The enzyme catalyses S-ubiquitinyl-[E1 ubiquitin-activating enzyme]-L-cysteine + [E2 ubiquitin-conjugating enzyme]-L-cysteine = [E1 ubiquitin-activating enzyme]-L-cysteine + S-ubiquitinyl-[E2 ubiquitin-conjugating enzyme]-L-cysteine.. The protein operates within protein modification; protein ubiquitination. Catalyzes the covalent attachment of ubiquitin to other proteins. The sequence is that of Ubiquitin-conjugating enzyme E2-16 kDa (UBC1) from Pyricularia oryzae (strain 70-15 / ATCC MYA-4617 / FGSC 8958) (Rice blast fungus).